We begin with the raw amino-acid sequence, 182 residues long: Pentatricopeptide repeat-containing protein At2g01360 (182 aa).

3 PPR repeats span residues 30 to 64, 65 to 95, and 98 to 132; these read EKSAYLALAGNFLRSNELSKVIDVVKEMVKSQHSL, GVYHGAMLIHMLGFGRRPSLAAEALDLLPDD, and GLSAYTALMDVYISAGSPEKAMKILGEMREREIMP.

It belongs to the PPR family. P subfamily.

The sequence is that of Pentatricopeptide repeat-containing protein At2g01360 from Arabidopsis thaliana (Mouse-ear cress).